We begin with the raw amino-acid sequence, 966 residues long: Probable LIM domain-containing serine/threonine-protein kinase DDB_G0286997 (966 aa).

2 LIM zinc-binding domains span residues 3–62 (SRCG…LNAP) and 63–120 (KCFK…KPPP). Disordered stretches follow at residues 208–291 (YSLS…PTED) and 331–588 (PLNQ…EQQV). Over residues 211–231 (SSPSSSSSSSSSSSSSSSSPP) the composition is skewed to low complexity. Polar residues predominate over residues 232 to 269 (NTFNKSSDFLRNPLNNNVKSSSSSIGGNFVNKSQQQQQ). Low complexity-rich tracts occupy residues 270 to 284 (PIDS…ISPS) and 331 to 350 (PLNQ…SPNL). The span at 374–389 (TTTFSNPLLKTKNQSF) shows a compositional bias: polar residues. Over residues 419–430 (PLPPPPITPIPS) the composition is skewed to pro residues. Low complexity predominate over residues 431 to 449 (PSSSSIIINNQQQQQQESQ). The segment covering 490 to 511 (KPIVLPPPPLDMEQLPLPPPPL) has biased composition (pro residues). Polar residues predominate over residues 513–526 (SSQINQSLKSTQHN). Residues 543-560 (IQKQSIPTRKPQLPQSSN) show a composition bias toward low complexity. Residues 561–570 (PSPPSPPSPQ) are compositionally biased toward pro residues. One can recognise a Protein kinase domain in the interval 702-959 (VIFGDVIAAG…DTLKKISESL (258 aa)). ATP is bound by residues 708 to 716 (IAAGASGKV) and Lys-729. Catalysis depends on Asp-825, which acts as the Proton acceptor.

This sequence belongs to the protein kinase superfamily. TKL Ser/Thr protein kinase family.

The catalysed reaction is L-seryl-[protein] + ATP = O-phospho-L-seryl-[protein] + ADP + H(+). It catalyses the reaction L-threonyl-[protein] + ATP = O-phospho-L-threonyl-[protein] + ADP + H(+). The chain is Probable LIM domain-containing serine/threonine-protein kinase DDB_G0286997 from Dictyostelium discoideum (Social amoeba).